Here is a 145-residue protein sequence, read N- to C-terminus: MQLYLVLLLISYLLTPIGASILGRCTVAKMLYDGGLNYFEGYSLENWVCLAYFESKFNPSAVYEDPQDGSTGFGLFQIRDNEWCGHGKNLCSVSCTALLNPNLKDTIQCAKKIVKGKHGMGAWPIWSKNCQLSDVLDRWLDGCDL.

A signal peptide spans 1-19; it reads MQLYLVLLLISYLLTPIGA. Residues 20–145 enclose the C-type lysozyme domain; that stretch reads SILGRCTVAK…LDRWLDGCDL (126 aa). 4 disulfide bridges follow: cysteine 25–cysteine 143, cysteine 49–cysteine 130, cysteine 84–cysteine 95, and cysteine 91–cysteine 109. Residue glutamate 54 is part of the active site.

It belongs to the glycosyl hydrolase 22 family. As to quaternary structure, monomer. As to expression, expressed strongly in testis and in epididymis, and weakly in brain and lung. Detected in sperm (at protein level).

It localises to the secreted. The protein localises to the cytoplasmic vesicle. Its subcellular location is the secretory vesicle. It is found in the acrosome. The protein resides in the cell projection. It localises to the cilium. The protein localises to the flagellum. Its function is as follows. May be involved in fertilization. Has no detectable bacteriolytic in vitro. Has no lysozyme activity in vitro. The polypeptide is Lysozyme-like protein 4 (Lyzl4) (Mus musculus (Mouse)).